Consider the following 157-residue polypeptide: Large ribosomal subunit protein eL21 (157 aa).

The disordered stretch occupies residues 110–132 (QANDQAKAEGNKAGKRVSTKRNP).

It belongs to the eukaryotic ribosomal protein eL21 family.

This chain is Large ribosomal subunit protein eL21 (RPL21), found in Tetrahymena thermophila (strain SB210).